The sequence spans 470 residues: Probable citrate synthase, mitochondrial (470 aa).

Active-site residues include histidine 297, histidine 351, and aspartate 406.

This sequence belongs to the citrate synthase family. In terms of assembly, homodimer.

The protein localises to the mitochondrion matrix. The catalysed reaction is oxaloacetate + acetyl-CoA + H2O = citrate + CoA + H(+). It functions in the pathway carbohydrate metabolism; tricarboxylic acid cycle; isocitrate from oxaloacetate: step 1/2. The chain is Probable citrate synthase, mitochondrial from Leishmania braziliensis.